We begin with the raw amino-acid sequence, 518 residues long: Probable cytosol aminopeptidase (518 aa).

Residues K270 and D275 each coordinate Mn(2+). K282 is an active-site residue. The Mn(2+) site is built by D293, D352, and E354. R356 is a catalytic residue. Residues 495–507 are compositionally biased toward polar residues; that stretch reads SRTTRQPGSTGET. The tract at residues 495–518 is disordered; it reads SRTTRQPGSTGETGSRKNRRKSKE.

Belongs to the peptidase M17 family. Mn(2+) is required as a cofactor.

It localises to the cytoplasm. The catalysed reaction is Release of an N-terminal amino acid, Xaa-|-Yaa-, in which Xaa is preferably Leu, but may be other amino acids including Pro although not Arg or Lys, and Yaa may be Pro. Amino acid amides and methyl esters are also readily hydrolyzed, but rates on arylamides are exceedingly low.. It carries out the reaction Release of an N-terminal amino acid, preferentially leucine, but not glutamic or aspartic acids.. Presumably involved in the processing and regular turnover of intracellular proteins. Catalyzes the removal of unsubstituted N-terminal amino acids from various peptides. This chain is Probable cytosol aminopeptidase, found in Nitrosospira multiformis (strain ATCC 25196 / NCIMB 11849 / C 71).